A 335-amino-acid chain; its full sequence is Tetraacyldisaccharide 4'-kinase (335 aa).

Position 58-65 (58-65 (TVGGSGKT)) interacts with ATP.

The protein belongs to the LpxK family.

It carries out the reaction a lipid A disaccharide + ATP = a lipid IVA + ADP + H(+). The protein operates within glycolipid biosynthesis; lipid IV(A) biosynthesis; lipid IV(A) from (3R)-3-hydroxytetradecanoyl-[acyl-carrier-protein] and UDP-N-acetyl-alpha-D-glucosamine: step 6/6. Functionally, transfers the gamma-phosphate of ATP to the 4'-position of a tetraacyldisaccharide 1-phosphate intermediate (termed DS-1-P) to form tetraacyldisaccharide 1,4'-bis-phosphate (lipid IVA). The protein is Tetraacyldisaccharide 4'-kinase of Shewanella sp. (strain MR-4).